Here is an 86-residue protein sequence, read N- to C-terminus: Small ribosomal subunit protein bS20 (86 aa).

It belongs to the bacterial ribosomal protein bS20 family.

Its function is as follows. Binds directly to 16S ribosomal RNA. The chain is Small ribosomal subunit protein bS20 from Exiguobacterium sibiricum (strain DSM 17290 / CCUG 55495 / CIP 109462 / JCM 13490 / 255-15).